A 250-amino-acid chain; its full sequence is MVMTNGKLILLRHGQSAWNASNQFTGWVDVDLTTIGEAEAKRGGELLVENNVLPDVVYTSLLRRAIRTANLALDAADRHWIPVVRDWRLNERHYGALQGLNKAETKDKYGDEQYMAWRRSYGTPPPELADDAEYSQAGDVRYKDLESVPRTECLKDVVERFIPYFEEEILPRVKKGENVLIAAHGNSLRALVKHLDNISDDDIAELNIPTGIPLVYEITPEGTVVNPGGTYLDPEAAAAGAAAVANQGGK.

Substrate-binding positions include 12 to 19, 25 to 26, R64, 91 to 94, K102, 118 to 119, and 185 to 186; these read RHGQSAWN, TG, ERHY, RR, and GN. H13 acts as the Tele-phosphohistidine intermediate in catalysis. E91 (proton donor/acceptor) is an active-site residue.

It belongs to the phosphoglycerate mutase family. BPG-dependent PGAM subfamily.

It catalyses the reaction (2R)-2-phosphoglycerate = (2R)-3-phosphoglycerate. It participates in carbohydrate degradation; glycolysis; pyruvate from D-glyceraldehyde 3-phosphate: step 3/5. In terms of biological role, catalyzes the interconversion of 2-phosphoglycerate and 3-phosphoglycerate. The sequence is that of 2,3-bisphosphoglycerate-dependent phosphoglycerate mutase from Corynebacterium efficiens (strain DSM 44549 / YS-314 / AJ 12310 / JCM 11189 / NBRC 100395).